The primary structure comprises 607 residues: Pescadillo homolog (607 aa).

The segment at 301–341 (ANVVEQSEKTTEDADEEPETEENLDEFKPADGADNEDSKSL) is disordered. Over residues 313-324 (DADEEPETEENL) the composition is skewed to acidic residues. Residues 325–339 (DEFKPADGADNEDSK) show a composition bias toward basic and acidic residues. The 94-residue stretch at 348–441 (SNTSLFSNFT…ILERTDLYAC (94 aa)) folds into the BRCT domain. The stretch at 497–604 (ENVEQIDDAE…RDIEKRKKLK (108 aa)) forms a coiled coil. The tract at residues 531 to 607 (QNSKSAKKTK…EKRKKLKVEN (77 aa)) is disordered. Basic and acidic residues-rich tracts occupy residues 544–561 (RDTL…KELS) and 595–607 (RDIE…KVEN).

It belongs to the pescadillo family. Component of the NOP7 complex, composed of erb1/SPBC4F6.13c, ppp1/SPBC19F5.05c and ytm1/SPAC890.04c. Within the NOP7 complex erb1/SPBC4F6.13c appears to interact directly with ppp1/SPBC19F5.05c and ytm1/SPAC890.04c. The NOP7 complex also associates with the 66S pre-ribosome.

The protein resides in the nucleus. It is found in the nucleoplasm. Its subcellular location is the nucleolus. Its function is as follows. Component of the NOP7 complex, which is required for maturation of the 25S and 5.8S ribosomal RNAs and formation of the 60S ribosome. This Schizosaccharomyces pombe (strain 972 / ATCC 24843) (Fission yeast) protein is Pescadillo homolog (ppp1).